Consider the following 509-residue polypeptide: ATP synthase subunit alpha (509 aa).

169–176 (GDRKTGKT) provides a ligand contact to ATP.

This sequence belongs to the ATPase alpha/beta chains family. F-type ATPases have 2 components, CF(1) - the catalytic core - and CF(0) - the membrane proton channel. CF(1) has five subunits: alpha(3), beta(3), gamma(1), delta(1), epsilon(1). CF(0) has three main subunits: a(1), b(2) and c(9-12). The alpha and beta chains form an alternating ring which encloses part of the gamma chain. CF(1) is attached to CF(0) by a central stalk formed by the gamma and epsilon chains, while a peripheral stalk is formed by the delta and b chains.

It is found in the cell membrane. The enzyme catalyses ATP + H2O + 4 H(+)(in) = ADP + phosphate + 5 H(+)(out). Produces ATP from ADP in the presence of a proton gradient across the membrane. The alpha chain is a regulatory subunit. The sequence is that of ATP synthase subunit alpha from Limosilactobacillus reuteri (strain DSM 20016) (Lactobacillus reuteri).